A 170-amino-acid chain; its full sequence is AP-5 complex subunit sigma-1 (170 aa).

In terms of assembly, probably part of the adaptor protein complex 5 (AP-5) a tetramer composed of AP5B1, AP5M1, AP5S1 and AP5Z1. Interacts with ZFYVE26 and SPG11.

Its subcellular location is the cytoplasm. The protein resides in the cytosol. It localises to the late endosome membrane. It is found in the lysosome membrane. Functionally, as part of AP-5, a probable fifth adaptor protein complex it may be involved in endosomal transport. In Mus musculus (Mouse), this protein is AP-5 complex subunit sigma-1 (Ap5s1).